Here is a 370-residue protein sequence, read N- to C-terminus: WAT1-related protein At1g44800 (370 aa).

Helical transmembrane passes span 11-31 (PILAIISLQFGYAGMYIITMV), 41-61 (VLATYRHVVATVVMAPFALMF), 67-87 (PKMTLAIFWRLLALGILEPLM), 102-122 (SYTSAFTNALPAVTFILALIF), 142-162 (VITVGGAMIMTLYKGPAIEIV), 182-202 (WVLGTIAIMGSISTWAAFFIL), 216-236 (LVTLICGIGTILNAIASLIMV), 252-272 (AAVYSGVVCSGIAYYIQSIVI), 278-298 (VFTTSFSPMCMIITAFLGALV), and 303-323 (IHLGSIIGAVFIVLGLYSVVW). EamA domains lie at 23–143 (AGMY…GTVI) and 195–322 (TWAA…YSVV).

It belongs to the drug/metabolite transporter (DMT) superfamily. Plant drug/metabolite exporter (P-DME) (TC 2.A.7.4) family.

It localises to the membrane. In Arabidopsis thaliana (Mouse-ear cress), this protein is WAT1-related protein At1g44800.